We begin with the raw amino-acid sequence, 366 residues long: MVPEMSERQEFQASEFAYLLENSSYDYGENETYFCCTSPPCPQDFSLNFDRTFLPVLYSLLFVLGLLGNGVVAVVLLSQRAALSSTDTFLLHLAVADALLVLTLPLWAVDAAIQWVFGSGLCKVAGALFNINFYAGALLLACISFDRYLSIVHATQFYRRGPPARVALTCVAVWGLCLLFALPDFIFLSSHHDNRLNATHCQYNFPQEGRTALRVLQLVAGFLLPLLVMAYCYARILTVLLVSRGQRRLRAMRLVVVVVVAFALCWTPYHLVVLVDTLMDLGALARNCGRESRVDVAKSVTSGMGYMHCCLNPLLYAFVGVKFRERMWVLLMRLGCPDQRGHQRQPSASRRDSSWSETTEASYSGL.

Topologically, residues 1–55 (MVPEMSERQEFQASEFAYLLENSSYDYGENETYFCCTSPPCPQDFSLNFDRTFLP) are extracellular. A glycan (N-linked (GlcNAc...) asparagine) is linked at asparagine 22. Sulfotyrosine occurs at positions 25 and 27. Asparagine 30 is a glycosylation site (N-linked (GlcNAc...) asparagine). A helical membrane pass occupies residues 56-76 (VLYSLLFVLGLLGNGVVAVVL). Residues 77-88 (LSQRAALSSTDT) are Cytoplasmic-facing. A helical transmembrane segment spans residues 89-109 (FLLHLAVADALLVLTLPLWAV). Residues 110-124 (DAAIQWVFGSGLCKV) are Extracellular-facing. The cysteines at positions 122 and 201 are disulfide-linked. The chain crosses the membrane as a helical span at residues 125 to 145 (AGALFNINFYAGALLLACISF). The Cytoplasmic segment spans residues 146–167 (DRYLSIVHATQFYRRGPPARVA). A helical membrane pass occupies residues 168–188 (LTCVAVWGLCLLFALPDFIFL). At 189–221 (SSHHDNRLNATHCQYNFPQEGRTALRVLQLVAG) the chain is on the extracellular side. N-linked (GlcNAc...) asparagine glycosylation occurs at asparagine 197. A helical membrane pass occupies residues 222–242 (FLLPLLVMAYCYARILTVLLV). The Cytoplasmic segment spans residues 243–254 (SRGQRRLRAMRL). The helical transmembrane segment at 255-275 (VVVVVVAFALCWTPYHLVVLV) threads the bilayer. Over 276–299 (DTLMDLGALARNCGRESRVDVAKS) the chain is Extracellular. A helical membrane pass occupies residues 300–320 (VTSGMGYMHCCLNPLLYAFVG). The Cytoplasmic portion of the chain corresponds to 321–366 (VKFRERMWVLLMRLGCPDQRGHQRQPSASRRDSSWSETTEASYSGL). The disordered stretch occupies residues 339-366 (QRGHQRQPSASRRDSSWSETTEASYSGL). Over residues 355–366 (WSETTEASYSGL) the composition is skewed to polar residues.

The protein belongs to the G-protein coupled receptor 1 family. Homomer. Forms heteromers with ACKR4. Interacts with PF4/CXCL4. Sulfation on Tyr-25 and Tyr-27 is essential for CXCL10 binding. In terms of processing, N-glycosylated.

It is found in the cell membrane. Receptor for the C-X-C chemokine CXCL9, CXCL10 and CXCL11 and mediates the proliferation, survival and angiogenic activity of mesangial cells through a heterotrimeric G-protein signaling pathway. Probably promotes cell chemotaxis response. Binds to CCL21. Upon activation by PF4, induces activated T-lymphocytes migration mediated via downstream Ras/extracellular signal-regulated kinase (ERK) signaling. The polypeptide is C-X-C chemokine receptor type 3 (CXCR3) (Capra hircus (Goat)).